Reading from the N-terminus, the 412-residue chain is Probable tRNA pseudouridine synthase D (412 aa).

Catalysis depends on D97, which acts as the Nucleophile. A TRUD domain is found at 167 to 370; it reads ALPNYYGYQR…YGGYRKVVLT (204 aa).

The protein belongs to the pseudouridine synthase TruD family.

It catalyses the reaction uridine(13) in tRNA = pseudouridine(13) in tRNA. Functionally, could be responsible for synthesis of pseudouridine from uracil-13 in transfer RNAs. In Pyrobaculum islandicum (strain DSM 4184 / JCM 9189 / GEO3), this protein is Probable tRNA pseudouridine synthase D.